The chain runs to 122 residues: Large ribosomal subunit protein uL14 (122 aa).

Belongs to the universal ribosomal protein uL14 family. As to quaternary structure, part of the 50S ribosomal subunit. Forms a cluster with proteins L3 and L19. In the 70S ribosome, L14 and L19 interact and together make contacts with the 16S rRNA in bridges B5 and B8.

Its function is as follows. Binds to 23S rRNA. Forms part of two intersubunit bridges in the 70S ribosome. The protein is Large ribosomal subunit protein uL14 of Chlamydia trachomatis serovar A (strain ATCC VR-571B / DSM 19440 / HAR-13).